The following is a 544-amino-acid chain: Chaperonin GroEL (544 aa).

ATP is bound by residues 30 to 33 (TLGP), Lys51, 87 to 91 (DGTTT), Gly415, and Asp495.

This sequence belongs to the chaperonin (HSP60) family. As to quaternary structure, forms a cylinder of 14 subunits composed of two heptameric rings stacked back-to-back. Interacts with the co-chaperonin GroES.

It localises to the cytoplasm. The catalysed reaction is ATP + H2O + a folded polypeptide = ADP + phosphate + an unfolded polypeptide.. Together with its co-chaperonin GroES, plays an essential role in assisting protein folding. The GroEL-GroES system forms a nano-cage that allows encapsulation of the non-native substrate proteins and provides a physical environment optimized to promote and accelerate protein folding. This is Chaperonin GroEL from Neisseria flavescens.